Here is a 201-residue protein sequence, read N- to C-terminus: Superoxide dismutase [Mn/Fe] (201 aa).

Fe(3+) contacts are provided by histidine 27, histidine 81, aspartate 162, and histidine 166. Mn(2+) contacts are provided by histidine 27, histidine 81, aspartate 162, and histidine 166.

Belongs to the iron/manganese superoxide dismutase family. As to quaternary structure, homodimer. Mn(2+) is required as a cofactor. It depends on Fe(3+) as a cofactor.

The enzyme catalyses 2 superoxide + 2 H(+) = H2O2 + O2. Destroys superoxide anion radicals which are normally produced within the cells and which are toxic to biological systems. Catalyzes the dismutation of superoxide anion radicals into O2 and H2O2 by successive reduction and oxidation of the transition metal ion at the active site. This is Superoxide dismutase [Mn/Fe] (sodA) from Staphylococcus carnosus.